Here is a 65-residue protein sequence, read N- to C-terminus: uncharacterized protein (65 aa).

This is an uncharacterized protein from Archaeoglobus fulgidus (strain ATCC 49558 / DSM 4304 / JCM 9628 / NBRC 100126 / VC-16).